We begin with the raw amino-acid sequence, 258 residues long: Ribonuclease PH (258 aa).

Phosphate-binding positions include arginine 86 and 124–126 (GTR).

This sequence belongs to the RNase PH family. In terms of assembly, homohexameric ring arranged as a trimer of dimers.

It catalyses the reaction tRNA(n+1) + phosphate = tRNA(n) + a ribonucleoside 5'-diphosphate. Functionally, phosphorolytic 3'-5' exoribonuclease that plays an important role in tRNA 3'-end maturation. Removes nucleotide residues following the 3'-CCA terminus of tRNAs; can also add nucleotides to the ends of RNA molecules by using nucleoside diphosphates as substrates, but this may not be physiologically important. Probably plays a role in initiation of 16S rRNA degradation (leading to ribosome degradation) during starvation. The chain is Ribonuclease PH from Caldicellulosiruptor saccharolyticus (strain ATCC 43494 / DSM 8903 / Tp8T 6331).